A 708-amino-acid polypeptide reads, in one-letter code: ATP-dependent DNA helicase Hel308 (708 aa).

Residues Gln-28 and 46-53 contribute to the ATP site; that span reads TATASGKS. The 166-residue stretch at 33 to 198 folds into the Helicase ATP-binding domain; the sequence is RAGIFDGRSV…WLGARLVESS (166 aa). Residues 143-146 carry the DEAH box motif; the sequence is DEIH. A Helicase C-terminal domain is found at 231–429; the sequence is EVALAVDAVA…EPNLRAHVLG (199 aa).

Belongs to the helicase family. Hel308 subfamily. Monomer.

It catalyses the reaction Couples ATP hydrolysis with the unwinding of duplex DNA by translocating in the 3'-5' direction.. The enzyme catalyses ATP + H2O = ADP + phosphate + H(+). Its function is as follows. DNA-dependent ATPase and 3'-5' DNA helicase that may be involved in repair of stalled replication forks. The polypeptide is ATP-dependent DNA helicase Hel308 (Pyrobaculum calidifontis (strain DSM 21063 / JCM 11548 / VA1)).